The sequence spans 1863 residues: Calcineurin-binding protein 1 (1863 aa).

3 TPR repeats span residues 30-65, 81-116, and 118-150; these read LSQTYHDGLLKLQAKDYDKARELLESILKDPIITNS, FLALKNLATVFLELGSSHYENALNCYLQAIDLDAKD, and VLWNHLGTLSCSMGLLSISRWAFEQGLLCSPNN. The tract at residues 315-361 is disordered; it reads ERESGGSVKEKEPVFSEEHPQERRSTRLERLRNQKPEKEGLEFDNSK. TPR repeat units lie at residues 543–576, 602–637, 866–900, 955–988, 990–1009, 1011–1031, 1143–1183, 1226–1263, 1264–1297, 1306–1339, 1377–1412, and 1508–1541; these read ARYFWLSARLSILEDNKAKALEEYLRCLSLLGRE, IHEINLLKIDFLLENNIPEMMEKEFYSECVNLLAPL, INSPDGLGHDMGLPDKLCRNEVKSFLEEVHVEKNE, QCFFCLYGLNLRVDGSYEDELAVHKNTSRGDYQT, EQCVDVFQYILPYAKASSRT, LVKLRRVLRAIKKHFSQPPDD, FESW…SQRV, VPFYDQRSVLPSKDATWTRFCENSMKHFNKAFSHRQDW, SHAFYMGKLSEKLGHSYEISLSYYKQAMTLNPSA, ASRLKLLNACGKQNLEALKVLASYCFDESIKDTA, EGVWHMLYNDSLSALGICVEGDLKHFHKARYMLAQG, and NSLRSDKRFSLCVEDLVPVAIGRYVKALVSSMSR. The span at 894–923 shows a compositional bias: basic and acidic residues; that stretch reads VHVEKNENNKTESKKDGSEEQVGYREKEQS. The segment at 894 to 941 is disordered; sequence VHVEKNENNKTESKKDGSEEQVGYREKEQSEQQSKQIPEHTEEVAEEE. The segment at 1813-1840 is disordered; the sequence is KMKRGASTSSVVPSVQSGGTSEPEPAPK. Residues 1818-1832 show a composition bias toward polar residues; sequence ASTSSVVPSVQSGGT.

In terms of assembly, component of the HIRA complex made of UBN1, UBN2, ASF1A, CABIN1 and HIRA. In terms of tissue distribution, expressed at low levels in seedlings.

It localises to the nucleus. Its function is as follows. May be required for replication-independent chromatin assembly. This Arabidopsis thaliana (Mouse-ear cress) protein is Calcineurin-binding protein 1.